We begin with the raw amino-acid sequence, 814 residues long: S-layer protein sap (814 aa).

A signal peptide spans 1-29 (MAKTNSYKKVIAGTMTAAMVAGVVSPVAA). SLH domains are found at residues 30–93 (AGKT…DAKP), 94–150 (SFAD…KVNG), and 152–214 (PATK…AAKV). In terms of domain architecture, BIG2 spans 403 to 479 (FTSKDFKQNN…TVKDSKGKEL (77 aa)).

In terms of processing, probably glycosylated.

The protein resides in the secreted. It localises to the cell wall. Its subcellular location is the S-layer. The S-layer is a paracrystalline mono-layered assembly of proteins which coat the surface of bacteria. This Bacillus anthracis protein is S-layer protein sap (sap).